A 458-amino-acid polypeptide reads, in one-letter code: UDP-N-acetylmuramoylalanine--D-glutamate ligase (458 aa).

124 to 130 (GSDGKTT) contacts ATP.

It belongs to the MurCDEF family.

It is found in the cytoplasm. It carries out the reaction UDP-N-acetyl-alpha-D-muramoyl-L-alanine + D-glutamate + ATP = UDP-N-acetyl-alpha-D-muramoyl-L-alanyl-D-glutamate + ADP + phosphate + H(+). It participates in cell wall biogenesis; peptidoglycan biosynthesis. Cell wall formation. Catalyzes the addition of glutamate to the nucleotide precursor UDP-N-acetylmuramoyl-L-alanine (UMA). This is UDP-N-acetylmuramoylalanine--D-glutamate ligase from Clostridium tetani (strain Massachusetts / E88).